A 349-amino-acid polypeptide reads, in one-letter code: GTP 3',8-cyclase (349 aa).

Positions 26 to 245 (GFGRAVTYLR…SSFWTLTDIP (220 aa)) constitute a Radical SAM core domain. Residue Arg-35 participates in GTP binding. [4Fe-4S] cluster contacts are provided by Cys-42 and Cys-46. Residue Tyr-48 coordinates S-adenosyl-L-methionine. A [4Fe-4S] cluster-binding site is contributed by Cys-49. Arg-84 serves as a coordination point for GTP. Gly-88 contacts S-adenosyl-L-methionine. Residue Thr-118 participates in GTP binding. Ser-142 is a binding site for S-adenosyl-L-methionine. A GTP-binding site is contributed by Lys-178. Position 212 (Met-212) interacts with S-adenosyl-L-methionine. Residues Cys-275 and Cys-278 each contribute to the [4Fe-4S] cluster site. A GTP-binding site is contributed by 280–282 (RVR). Cys-292 serves as a coordination point for [4Fe-4S] cluster.

Belongs to the radical SAM superfamily. MoaA family. Monomer and homodimer. It depends on [4Fe-4S] cluster as a cofactor.

The enzyme catalyses GTP + AH2 + S-adenosyl-L-methionine = (8S)-3',8-cyclo-7,8-dihydroguanosine 5'-triphosphate + 5'-deoxyadenosine + L-methionine + A + H(+). The protein operates within cofactor biosynthesis; molybdopterin biosynthesis. Catalyzes the cyclization of GTP to (8S)-3',8-cyclo-7,8-dihydroguanosine 5'-triphosphate. This Caulobacter vibrioides (strain ATCC 19089 / CIP 103742 / CB 15) (Caulobacter crescentus) protein is GTP 3',8-cyclase.